Here is a 296-residue protein sequence, read N- to C-terminus: NAD kinase (296 aa).

The active-site Proton acceptor is aspartate 78. NAD(+) is bound by residues 78-79 (DG), 152-153 (ND), arginine 180, aspartate 182, and glutamine 251.

Belongs to the NAD kinase family. Requires a divalent metal cation as cofactor.

Its subcellular location is the cytoplasm. The catalysed reaction is NAD(+) + ATP = ADP + NADP(+) + H(+). Functionally, involved in the regulation of the intracellular balance of NAD and NADP, and is a key enzyme in the biosynthesis of NADP. Catalyzes specifically the phosphorylation on 2'-hydroxyl of the adenosine moiety of NAD to yield NADP. This chain is NAD kinase, found in Neisseria meningitidis serogroup C (strain 053442).